The following is a 151-amino-acid chain: Transcription antitermination protein NusB (151 aa).

The protein belongs to the NusB family.

Its function is as follows. Involved in transcription antitermination. Required for transcription of ribosomal RNA (rRNA) genes. Binds specifically to the boxA antiterminator sequence of the ribosomal RNA (rrn) operons. This Photobacterium profundum (strain SS9) protein is Transcription antitermination protein NusB.